The following is a 541-amino-acid chain: 2-isopropylmalate synthase (541 aa).

Residues 8 to 284 (VIIFDTTLRD…LTNINTRHIY (277 aa)) form the Pyruvate carboxyltransferase domain. 4 residues coordinate Mn(2+): D17, H208, H210, and N244. Positions 408-541 (RLELVQVSCG…DQPTEVVAGS (134 aa)) are regulatory domain.

Belongs to the alpha-IPM synthase/homocitrate synthase family. LeuA type 1 subfamily. Homodimer. Mn(2+) is required as a cofactor.

It is found in the cytoplasm. It carries out the reaction 3-methyl-2-oxobutanoate + acetyl-CoA + H2O = (2S)-2-isopropylmalate + CoA + H(+). It functions in the pathway amino-acid biosynthesis; L-leucine biosynthesis; L-leucine from 3-methyl-2-oxobutanoate: step 1/4. Catalyzes the condensation of the acetyl group of acetyl-CoA with 3-methyl-2-oxobutanoate (2-ketoisovalerate) to form 3-carboxy-3-hydroxy-4-methylpentanoate (2-isopropylmalate). The chain is 2-isopropylmalate synthase from Trichodesmium erythraeum (strain IMS101).